The following is an 80-amino-acid chain: U-actitoxin-Avd9a (80 aa).

The first 20 residues, 1 to 20, serve as a signal peptide directing secretion; sequence MNLKVLAVFVLCAILVVVTA. A propeptide spanning residues 21–39 is cleaved from the precursor; the sequence is ERRGTETGVYKKDTLQDLI. The ShKT domain maps to 45-80; the sequence is CIDRFPTGTCKQVKKGGSCKNSDKYRMNCRKTCGLC. Disulfide bonds link Cys45-Cys80, Cys54-Cys73, and Cys63-Cys77. Residues 68–69 are crucial for binding to potassium channels; that stretch reads KY.

It belongs to the sea anemone type 1 potassium channel toxin family. Type 1b subfamily.

Its subcellular location is the secreted. It is found in the nematocyst. Functionally, inhibits voltage-gated potassium channels (Kv1/KCNA). The polypeptide is U-actitoxin-Avd9a (Anemonia viridis (Snakelocks anemone)).